The primary structure comprises 219 residues: Regulatory protein YeiL (219 aa).

The tract at residues 19–97 (RLFHFLARDY…IEECWCLALP (79 aa)) is sensory domain. [4Fe-4S] cluster is bound by residues Cys68, Cys91, Cys93, and Cys116. The interval 111 to 131 (FLRKLCVTLSHKNYRNIVSLT) is dimer interface. One can recognise an HTH crp-type domain in the interval 136–199 (FPLVNRLAAF…KKGYLIKNRK (64 aa)). Positions 158–181 (KHTQAAEYLGVSYRHLLYVLAQFI) form a DNA-binding region, H-T-H motif.

Homodimer. The cofactor is [4Fe-4S] cluster.

The protein resides in the cytoplasm. Transcription regulator involved in mid-term, stationary-phase viability under nitrogen starvation. Might control expression of the salvage pathways or in some other way repress the recycling of nucleobases to nucleic acids and enhance their use as general nitrogen sources during nitrogen-limited growth. This chain is Regulatory protein YeiL (yeiL), found in Escherichia coli O157:H7.